A 243-amino-acid chain; its full sequence is Venom nerve growth factor 5 (243 aa).

An N-terminal signal peptide occupies residues M1 to A18. The propeptide occupies A19–R125. Residues G47–D66 show a composition bias toward basic and acidic residues. The segment at G47–Q67 is disordered. Cystine bridges form between C139–C204, C182–C232, and C192–C234. N-linked (GlcNAc...) asparagine glycosylation is present at N148.

It belongs to the NGF-beta family. In terms of assembly, homodimer; non-covalently linked. In terms of tissue distribution, expressed by the venom gland.

The protein localises to the secreted. In terms of biological role, nerve growth factor is important for the development and maintenance of the sympathetic and sensory nervous systems. It stimulates division and differentiation of sympathetic and embryonic sensory neurons as well as basal forebrain cholinergic neurons in the brain. Its relevance in the snake venom is not clear. However, it has been shown to inhibit metalloproteinase-dependent proteolysis of platelet glycoprotein Ib alpha, suggesting a metalloproteinase inhibition to prevent metalloprotease autodigestion and/or protection against prey proteases. Binds a lipid between the two protein chains in the homodimer. The lipid-bound form promotes histamine relase from mouse mast cells, contrary to the lipid-free form. The chain is Venom nerve growth factor 5 from Tropidechis carinatus (Australian rough-scaled snake).